The sequence spans 365 residues: Fucose-specific lectin (365 aa).

The N-terminal stretch at 1-21 (MKLLHFTILLQVSLFPASSLA) is a signal peptide. Tandem repeats lie at residues 22-79 (QAGG…NDTI), 80-141 (AKAR…NQYN), 142-206 (FQVA…RLAN), 207-261 (FGPA…VRTA), 262-309 (KPRT…DGAF), and 310-365 (EHSA…IPPA). Residues 22-365 (QAGGNNTEVQ…RRGILAIPPA (344 aa)) form a 6 X approximate tandem repeats region. The N-linked (GlcNAc...) asparagine glycan is linked to Asn-26. Residues Arg-51, Glu-63, and Trp-70 each contribute to the beta-L-fucose site. N-linked (GlcNAc...) asparagine glycans are attached at residues Asn-76 and Asn-85. Arg-111 is a binding site for beta-L-fucose. Asn-118 is a glycosylation site (N-linked (GlcNAc...) asparagine). Residues Glu-123, Trp-132, Arg-164, Glu-176, Trp-201, and Arg-231 each coordinate beta-L-fucose. Asn-248 carries an N-linked (GlcNAc...) asparagine glycan. Beta-L-fucose contacts are provided by Arg-283, Arg-333, and Glu-347.

It belongs to the fungal fucose-specific lectin family. As to quaternary structure, homodimer.

The protein localises to the secreted. Probable L-fucose-binding lectin. In Arthroderma benhamiae (strain ATCC MYA-4681 / CBS 112371) (Trichophyton mentagrophytes), this protein is Fucose-specific lectin.